A 436-amino-acid polypeptide reads, in one-letter code: Histidinol dehydrogenase (436 aa).

NAD(+) contacts are provided by tyrosine 130, glutamine 191, and asparagine 214. Serine 237, glutamine 259, and histidine 262 together coordinate substrate. Residues glutamine 259 and histidine 262 each coordinate Zn(2+). Residues glutamate 327 and histidine 328 each act as proton acceptor in the active site. Histidine 328, aspartate 361, glutamate 415, and histidine 420 together coordinate substrate. Aspartate 361 contributes to the Zn(2+) binding site. Histidine 420 lines the Zn(2+) pocket.

The protein belongs to the histidinol dehydrogenase family. Requires Zn(2+) as cofactor.

It catalyses the reaction L-histidinol + 2 NAD(+) + H2O = L-histidine + 2 NADH + 3 H(+). The protein operates within amino-acid biosynthesis; L-histidine biosynthesis; L-histidine from 5-phospho-alpha-D-ribose 1-diphosphate: step 9/9. Its function is as follows. Catalyzes the sequential NAD-dependent oxidations of L-histidinol to L-histidinaldehyde and then to L-histidine. This is Histidinol dehydrogenase from Geobacter metallireducens (strain ATCC 53774 / DSM 7210 / GS-15).